A 100-amino-acid polypeptide reads, in one-letter code: Urease subunit gamma (100 aa).

Belongs to the urease gamma subunit family. As to quaternary structure, heterotrimer of UreA (gamma), UreB (beta) and UreC (alpha) subunits. Three heterotrimers associate to form the active enzyme.

It is found in the cytoplasm. The catalysed reaction is urea + 2 H2O + H(+) = hydrogencarbonate + 2 NH4(+). The protein operates within nitrogen metabolism; urea degradation; CO(2) and NH(3) from urea (urease route): step 1/1. This chain is Urease subunit gamma, found in Roseobacter denitrificans (strain ATCC 33942 / OCh 114) (Erythrobacter sp. (strain OCh 114)).